The sequence spans 284 residues: NAD(P)H-hydrate epimerase (284 aa).

Residues 1–55 (MSGLRTLLGLGLLVSSSRFPRVVARGGPRCPGPAWWAARPMHLGDSTMAGGTVKY) constitute a mitochondrion transit peptide. The YjeF N-terminal domain occupies 61–271 (AQAVDEELFN…DLEKKYQLNL (211 aa)). 115-119 (NNGGD) contributes to the (6S)-NADPHX binding site. Asn-116 is a K(+) binding site. N6-succinyllysine is present on Lys-140. A K(+)-binding site is contributed by Asp-181. (6S)-NADPHX contacts are provided by residues 185 to 191 (GFSFKGA) and Asp-214. Ser-217 is a binding site for K(+).

It belongs to the NnrE/AIBP family. In terms of assembly, homodimer. Interacts with APOA1 and APOA2. The cofactor is K(+). Post-translationally, undergoes physiological phosphorylation during sperm capacitation, downstream to PKA activation.

Its subcellular location is the mitochondrion. The protein localises to the secreted. The enzyme catalyses (6R)-NADHX = (6S)-NADHX. It catalyses the reaction (6R)-NADPHX = (6S)-NADPHX. In terms of biological role, catalyzes the epimerization of the S- and R-forms of NAD(P)HX, a damaged form of NAD(P)H that is a result of enzymatic or heat-dependent hydration. This is a prerequisite for the S-specific NAD(P)H-hydrate dehydratase to allow the repair of both epimers of NAD(P)HX. Accelerates cholesterol efflux from endothelial cells to high-density lipoprotein (HDL) and thereby regulates angiogenesis. The polypeptide is NAD(P)H-hydrate epimerase (Monodelphis domestica (Gray short-tailed opossum)).